Here is a 112-residue protein sequence, read N- to C-terminus: Prothymosin alpha (112 aa).

Met-1 carries the N-acetylmethionine modification. The interval 1-112 (MSDAAVDTSS…KKQKKTDEDD (112 aa)) is disordered. At Ser-2 the chain carries N-acetylserine; in Prothymosin alpha, N-terminally processed. Phosphoserine is present on Ser-2. Thr-8 bears the Phosphothreonine mark. Phosphoserine occurs at positions 9 and 10. 2 positions are modified to phosphothreonine: Thr-13 and Thr-14. Over residues 13–31 (TTKDLKEKKEVVEEAENGR) the composition is skewed to basic and acidic residues. Lys-15 is modified (N6-acetyllysine; alternate). At Lys-15 the chain carries N6-succinyllysine; alternate. Positions 43 to 84 (ENGEQEADNEVDEEEEEGGEEEEEEEEGDGEEEDGDEDEEAE) are enriched in acidic residues. Over residues 101–112 (ETKKQKKTDEDD) the composition is skewed to basic and acidic residues. Position 102 is a phosphothreonine (Thr-102). Lys-103 bears the N6-acetyllysine; alternate mark. Lys-103 participates in a covalent cross-link: Glycyl lysine isopeptide (Lys-Gly) (interchain with G-Cter in SUMO2); alternate. Thr-108 carries the phosphothreonine modification.

This sequence belongs to the pro/parathymosin family. In terms of assembly, interacts with NUPR1; regulates apoptotic process. Covalently linked to a small RNA of about 20 nucleotides.

Its subcellular location is the nucleus. In terms of biological role, prothymosin alpha may mediate immune function by conferring resistance to certain opportunistic infections. The protein is Prothymosin alpha (Ptma) of Rattus norvegicus (Rat).